Reading from the N-terminus, the 35-residue chain is Tau-theraphotoxin-Pc1b (35 aa).

Cystine bridges form between Cys-3/Cys-17, Cys-10/Cys-22, and Cys-16/Cys-29. The residue at position 35 (Phe-35) is a Phenylalanine amide.

The protein belongs to the neurotoxin 10 (Hwtx-1) family. 62 (Vatx) subfamily. Expressed by the venom gland.

Its subcellular location is the secreted. Its function is as follows. Selectively activates the mammalian capsaicin receptor TRPV1, a non-selective cation channel expressed by sensory neurons of the pain pathway. Is more potent than VaTx1, but less potent than VaTx3. Interacts with distinct regions of the channel than capsaicin, since it only acts on the extracellular face of the channel, and capsaicin binds to the cytosolic side. Also activates avian TRPV1, which is insensitive to capsaicin. Produce weak inhibition on potassium channels Kv2.1/KCNB1. This chain is Tau-theraphotoxin-Pc1b, found in Psalmopoeus cambridgei (Trinidad chevron tarantula).